The following is a 205-amino-acid chain: Small ribosomal subunit protein uS4 (205 aa).

Residues 18-49 (NIWGRPKSPVNKREYGPGQHGQRRKGKLSDFG) form a disordered region. The S4 RNA-binding domain occupies 94–157 (RRLDTVVYRA…KQLALVLEAN (64 aa)).

Belongs to the universal ribosomal protein uS4 family. As to quaternary structure, part of the 30S ribosomal subunit. Contacts protein S5. The interaction surface between S4 and S5 is involved in control of translational fidelity.

In terms of biological role, one of the primary rRNA binding proteins, it binds directly to 16S rRNA where it nucleates assembly of the body of the 30S subunit. Functionally, with S5 and S12 plays an important role in translational accuracy. The polypeptide is Small ribosomal subunit protein uS4 (Nitrobacter winogradskyi (strain ATCC 25391 / DSM 10237 / CIP 104748 / NCIMB 11846 / Nb-255)).